The following is a 455-amino-acid chain: DENN domain-containing protein 11 (455 aa).

Val-2 is subject to N-acetylvaline. Positions 15–187 (EGPAVSVPQD…QLEMPGHYSH (173 aa)) constitute a uDENN domain. A disordered region spans residues 21–61 (VPQDPALQAGGWVRGGSGGGRVAAEAPRRREPEEPAPPEVL). Residues 32-41 (WVRGGSGGGR) show a composition bias toward gly residues. Arg-41 carries the omega-N-methylarginine modification. The region spanning 214–362 (WLPSIHRYMY…LNSADREKYR (149 aa)) is the cDENN domain. The dDENN domain maps to 364–455 (LNEQRQMLLY…MLVIDNPCCP (92 aa)).

This sequence belongs to the DENND11 family. Expressed within the somatodendritic compartment of neurons, is also present on dendritic growth cones, but is not found in astrocytes.

In terms of biological role, probable guanine nucleotide exchange factor (GEF). May promote the exchange of GDP to GTP, converting inactive GDP-bound small GTPases into their active GTP-bound form. May play a role in neuritogenesis, as well as in neuronal recovery and/or restructuring in the hippocampus following transient cerebral ischemia. The protein is DENN domain-containing protein 11 (Dennd11) of Rattus norvegicus (Rat).